The following is a 202-amino-acid chain: Protein TIFY 11g (202 aa).

Residues 1-11 (MDAVGAAGGGA) are compositionally biased toward gly residues. The tract at residues 1-31 (MDAVGAAGGGAMLPAAARRGQPPQPPCMTTA) is disordered. Residues 12–21 (MLPAAARRGQ) are compositionally biased toward low complexity. In terms of domain architecture, Tify spans 101-136 (ATAPTAPLTIVYGGQVLVFEHYTAEAAEKLVQRTQH). Positions 185 to 200 (PIARKASLQRFLQKRK) match the Jas motif. The short motif at 187-194 (ARKASLQR) is the Nuclear localization signal element.

It belongs to the TIFY/JAZ family. Post-translationally, ubiquitinated. Targeted for degradation by the SCF(COI1) E3 ubiquitin ligase-proteasome pathway during jasmonate signaling.

The protein localises to the nucleus. Repressor of jasmonate responses. The sequence is that of Protein TIFY 11g from Oryza sativa subsp. japonica (Rice).